Here is an 83-residue protein sequence, read N- to C-terminus: MSGTKKVGSAGRFGARYGLKIRRRVAAVEAKMRQKHVCPVCGRRAVKRISTGIWQCTKCGAIFAGGAYLPVTPAGKVARRIME.

4 residues coordinate Zn(2+): Cys38, Cys41, Cys56, and Cys59. Residues 38–59 form a C4-type zinc finger; that stretch reads CPVCGRRAVKRISTGIWQCTKC.

This sequence belongs to the eukaryotic ribosomal protein eL43 family. Putative zinc-binding subfamily. As to quaternary structure, part of the 50S ribosomal subunit. Requires Zn(2+) as cofactor.

Binds to the 23S rRNA. The sequence is that of Large ribosomal subunit protein eL43 from Pyrococcus horikoshii (strain ATCC 700860 / DSM 12428 / JCM 9974 / NBRC 100139 / OT-3).